The following is a 501-amino-acid chain: Raftlin-2 (501 aa).

Disordered stretches follow at residues 1–20 (MGCGLRKLEDPDDSSPGKIF) and 196–238 (SWNE…SRKG). G2 is lipidated: N-myristoyl glycine. C3 carries the S-palmitoyl cysteine lipid modification. The segment covering 224–233 (MEQNGSPSSS) has biased composition (polar residues). Residue S405 is modified to Phosphoserine. The interval 407 to 454 (AQTTDKKASRRIKGEDKNKATSRSIGLDTTTPQPAESRHPPEECRLSP) is disordered. T409 bears the Phosphothreonine mark. A compositionally biased stretch (basic and acidic residues) spans 410–425 (TDKKASRRIKGEDKNK). The segment covering 427–440 (TSRSIGLDTTTPQP) has biased composition (polar residues). S430 is modified (phosphoserine). Positions 442-451 (ESRHPPEECR) are enriched in basic and acidic residues.

This sequence belongs to the raftlin family.

The protein localises to the cell membrane. Upon bacterial lipopolysaccharide stimulation, mediates clathrin-dependent internalization of TLR4 in dendritic cells, resulting in activation of TICAM1-mediated signaling and subsequent IFNB1 production. May regulate B-cell antigen receptor mediated-signaling. The sequence is that of Raftlin-2 (RFTN2) from Pongo abelii (Sumatran orangutan).